Consider the following 235-residue polypeptide: MAWQGLAAEFLQVPAVTRAYTAACVLTTAAVQLELLSPFQLYFNPHLVFRKFQVWRLVTNFLFFGPLGFSFFFNMLFVFRYCRMLEEGSFRGRTADFVFMFLFGGVLMTLLGLLGSLFFLGQALMAMLVYVWSRRSPRVRVNFFGLLTFQAPFLPWALMGFSLLLGNSILVDLLGIAVGHIYYFLEDVFPNQPGGKRLLQTPGFLKLLLDAPAEDPNYLPLPEEQPGPHLPPPQQ.

Over 1 to 22 the chain is Cytoplasmic; the sequence is MAWQGLAAEFLQVPAVTRAYTA. Residues 23–43 traverse the membrane as a helical segment; it reads ACVLTTAAVQLELLSPFQLYF. Residues 44–58 lie on the Lumenal side of the membrane; it reads NPHLVFRKFQVWRLV. The chain crosses the membrane as a helical span at residues 59 to 79; the sequence is TNFLFFGPLGFSFFFNMLFVF. At 80–98 the chain is on the cytoplasmic side; sequence RYCRMLEEGSFRGRTADFV. The chain crosses the membrane as a helical span at residues 99–119; that stretch reads FMFLFGGVLMTLLGLLGSLFF. Residues 120 to 157 lie on the Lumenal side of the membrane; sequence LGQALMAMLVYVWSRRSPRVRVNFFGLLTFQAPFLPWA. A helical transmembrane segment spans residues 158 to 178; sequence LMGFSLLLGNSILVDLLGIAV. Residues 179–235 are Cytoplasmic-facing; sequence GHIYYFLEDVFPNQPGGKRLLQTPGFLKLLLDAPAEDPNYLPLPEEQPGPHLPPPQQ. A disordered region spans residues 216 to 235; sequence PNYLPLPEEQPGPHLPPPQQ. Residues 223 to 235 are compositionally biased toward pro residues; that stretch reads EEQPGPHLPPPQQ.

This sequence belongs to the derlin family. Forms homo- and heterooligomers with DERL2 and, to a lesser extent, with DERL1. Interacts with VCP and EDEM1. Interacts with SELENOK and SELENOS. Interacts with the signal recognition particle/SRP and the SRP receptor; in the process of endoplasmic reticulum stress-induced pre-emptive quality control. As to expression, unlike DERL1 and DERL2, restricted to several tissues. Expressed at high levels in placenta, pancreas, spleen and small intestine.

It is found in the endoplasmic reticulum membrane. Functionally, functional component of endoplasmic reticulum-associated degradation (ERAD) for misfolded lumenal glycoproteins, but not that of misfolded nonglycoproteins. May act by forming a channel that allows the retrotranslocation of misfolded glycoproteins into the cytosol where they are ubiquitinated and degraded by the proteasome. May mediate the interaction between VCP and the misfolded glycoproteins. May be involved in endoplasmic reticulum stress-induced pre-emptive quality control, a mechanism that selectively attenuates the translocation of newly synthesized proteins into the endoplasmic reticulum and reroutes them to the cytosol for proteasomal degradation. In Homo sapiens (Human), this protein is Derlin-3.